The sequence spans 605 residues: Protein DENND6A (605 aa).

The disordered stretch occupies residues M1–A20. One can recognise a uDENN domain in the interval H60–K239. S124 is subject to Phosphoserine. The cDENN domain occupies E265–K390. One can recognise a dDENN domain in the interval L392–K525. An N6-methyllysine modification is found at K507.

The protein belongs to the DENND6 family.

The protein resides in the recycling endosome. It is found in the cytoplasm. Functionally, guanine nucleotide exchange factor (GEF) for RAB14. Component of an endocytic recycling pathway that is required for the control of ADAM10 transport, shedding of N-cadherin/CDH2 by ADAM9 or ADAM10 and regulation of cell-cell junctions. Required for RAB14 recruitment to recycling endosomes. The sequence is that of Protein DENND6A (Dennd6a) from Mus musculus (Mouse).